Reading from the N-terminus, the 229-residue chain is Somatolactin (229 aa).

An N-terminal signal peptide occupies residues 1-21 (MAALQEVLLAVLLWPVLVTIS). 3 disulfide bridges follow: Cys26/Cys36, Cys87/Cys203, and Cys220/Cys228. Residue Asn143 is glycosylated (N-linked (GlcNAc...) asparagine).

Belongs to the somatotropin/prolactin family. In terms of tissue distribution, pituitary gland.

It localises to the secreted. The chain is Somatolactin from Tetraodon miurus (Congo puffer).